The primary structure comprises 63 residues: Keratin-associated protein 19-8 (63 aa).

Belongs to the KRTAP type 19 family. Interacts with hair keratins.

Functionally, in the hair cortex, hair keratin intermediate filaments are embedded in an interfilamentous matrix, consisting of hair keratin-associated proteins (KRTAP), which are essential for the formation of a rigid and resistant hair shaft through their extensive disulfide bond cross-linking with abundant cysteine residues of hair keratins. The matrix proteins include the high-sulfur and high-glycine-tyrosine keratins. This chain is Keratin-associated protein 19-8 (KRTAP19-8), found in Homo sapiens (Human).